A 153-amino-acid chain; its full sequence is Transcriptional repressor NrdR (153 aa).

Residues 3–34 (CPFCNNINTQVKDSRAIEDDILIRRRRICLVC) fold into a zinc finger. The ATP-cone domain maps to 49 to 139 (FMVIKKNGET…VYMNFKNIND (91 aa)).

It belongs to the NrdR family. Requires Zn(2+) as cofactor.

Functionally, negatively regulates transcription of bacterial ribonucleotide reductase nrd genes and operons by binding to NrdR-boxes. The sequence is that of Transcriptional repressor NrdR from Ehrlichia canis (strain Jake).